Consider the following 274-residue polypeptide: Ommochrome-binding protein (274 aa).

Positions 1 to 18 are cleaved as a signal peptide; it reads MKLLILTICALHVNQMMA. N-linked (GlcNAc...) asparagine glycosylation occurs at Asn183.

In terms of assembly, monomer. Present in larval hemolymph and synthesized by the fat body.

Binds to an ommochrome, ommatin D which is a yellow chromophore. May be involved in guiding the chromophore through the hemolymph from the epidermis to the gut. The protein is Ommochrome-binding protein of Manduca sexta (Tobacco hawkmoth).